A 63-amino-acid polypeptide reads, in one-letter code: Sperm protamine P1 (63 aa).

Residues 1–63 (MARYRRHSRS…RYSRRGRRRY (63 aa)) are disordered.

The protein belongs to the protamine P1 family. Testis.

It is found in the nucleus. The protein resides in the chromosome. Its function is as follows. Protamines substitute for histones in the chromatin of sperm during the haploid phase of spermatogenesis. They compact sperm DNA into a highly condensed, stable and inactive complex. The protein is Sperm protamine P1 (PRM1) of Sminthopsis bindi (Kakadu dunnart).